Here is a 513-residue protein sequence, read N- to C-terminus: Steroid (22S)-hydroxylase (513 aa).

Residues 8-28 form a helical membrane-spanning segment; that stretch reads TLLPLLLLPSLLSLLLFLILL. The tract at residues 252 to 277 is disordered; that stretch reads DIKEEDQEEEEVKTEDEAEMSKSDHV. Acidic residues predominate over residues 254 to 269; sequence KEEDQEEEEVKTEDEA. Position 462 (C462) interacts with heme.

It belongs to the cytochrome P450 family. Heme is required as a cofactor. As to expression, expressed in stems, leaves, shoots, and roots, with a higher expression in siliques and apical shoots.

The protein resides in the membrane. The enzyme catalyses a C27-steroid + reduced [NADPH--hemoprotein reductase] + O2 = a (22S)-22-hydroxy C27-steroid + oxidized [NADPH--hemoprotein reductase] + H2O + H(+). It catalyses the reaction a C28-steroid + reduced [NADPH--hemoprotein reductase] + O2 = a (22S)-22-hydroxy C28-steroid + oxidized [NADPH--hemoprotein reductase] + H2O + H(+). The catalysed reaction is a C29-steroid + reduced [NADPH--hemoprotein reductase] + O2 = a (22S)-22-hydroxy C29-steroid + oxidized [NADPH--hemoprotein reductase] + H2O + H(+). It carries out the reaction cholesterol + reduced [NADPH--hemoprotein reductase] + O2 = (22S)-22-hydroxycholesterol + oxidized [NADPH--hemoprotein reductase] + H2O + H(+). The enzyme catalyses cholestanol + reduced [NADPH--hemoprotein reductase] + O2 = (22S)-22-hydroxycholestanol + oxidized [NADPH--hemoprotein reductase] + H2O + H(+). It catalyses the reaction campestanol + reduced [NADPH--hemoprotein reductase] + O2 = 6-deoxycathasterone + oxidized [NADPH--hemoprotein reductase] + H2O + H(+). The catalysed reaction is campesterol + reduced [NADPH--hemoprotein reductase] + O2 = (22S)-22-hydroxycampesterol + oxidized [NADPH--hemoprotein reductase] + H2O + H(+). It carries out the reaction 6-oxocampestanol + reduced [NADPH--hemoprotein reductase] + O2 = cathasterone + oxidized [NADPH--hemoprotein reductase] + H2O + H(+). The enzyme catalyses sitosterol + reduced [NADPH--hemoprotein reductase] + O2 = (22S)-22-hydroxysitosterol + oxidized [NADPH--hemoprotein reductase] + H2O + H(+). The protein operates within plant hormone biosynthesis; brassinosteroid biosynthesis. Functionally, catalyzes the C22-alpha-hydroxylation step in brassinosteroids biosynthesis. Converts campesterol (CR) to (22S)-22-hydroxycampesterol (22-OHCR, 22-hydroxyCR), campestanol (CN) to 6-deoxycathasterone (6-deoxoCT), and 6-oxocampestanol (6-oxoCN) to cathasterone (CT). Can also use cholesterol and cholestanol as substrates. The protein is Steroid (22S)-hydroxylase of Arabidopsis thaliana (Mouse-ear cress).